A 288-amino-acid polypeptide reads, in one-letter code: Serine/threonine-protein phosphatase PGAM5, mitochondrial (288 aa).

Residues 1-6 (MAFRQA) lie on the Mitochondrial matrix side of the membrane. The helical transmembrane segment at 7-29 (LQLAACGLAGGSAAVLFSAVAVG) threads the bilayer. Over 30–288 (KPRGGGDADT…FMPPDKITRS (259 aa)) the chain is Mitochondrial intermembrane. The tract at residues 76-81 (NVESGE) is interaction with KEAP1. Phosphoserine occurs at positions 79 and 86. Lys-115, Lys-143, and Lys-190 each carry N6-acetyllysine.

Belongs to the phosphoglycerate mutase family. BPG-dependent PGAM subfamily. As to quaternary structure, dimer. Forms a ternary complex with NFE2L2 and KEAP1. Interacts with BCL2L1 and MAP3K5. Upon TNF-induced necrosis, forms in complex with RIPK1, RIPK3 and MLKL; the formation of this complex leads to PGAM5 phosphorylation. Isoform 2, but not isoform 1, interacts with DNM1L; this interaction leads to DNM1L dephosphorylation and activation and eventually to mitochondria fragmentation. In terms of processing, phosphorylated by the RIPK1/RIPK3 complex under necrotic conditions. This phosphorylation increases PGAM5 phosphatase activity. Proteolytically cleaved by PARL in response to loss of mitochondrial membrane potential.

Its subcellular location is the mitochondrion outer membrane. It is found in the mitochondrion inner membrane. The catalysed reaction is O-phospho-L-seryl-[protein] + H2O = L-seryl-[protein] + phosphate. The enzyme catalyses O-phospho-L-threonyl-[protein] + H2O = L-threonyl-[protein] + phosphate. Mitochondrial serine/threonine phosphatase that dephosphorylates various substrates and thus plays a role in different biological processes including cellular senescence or mitophagy. Modulates cellular senescence by regulating mitochondrial dynamics. Mechanistically, participates in mitochondrial fission through dephosphorylating DNM1L/DRP1. Additionally, dephosphorylates MFN2 in a stress-sensitive manner and consequently protects it from ubiquitination and degradation to promote mitochondrial network formation. Regulates mitophagy independent of PARKIN by interacting with and dephosphorylating FUNDC1, which interacts with LC3. Regulates anti-oxidative response by forming a tertiary complex with KEAP1 and NRF2. Regulates necroptosis by acting as a RIPK3 target and recruiting the RIPK1-RIPK3-MLKL necrosis 'attack' complex to mitochondria. The polypeptide is Serine/threonine-protein phosphatase PGAM5, mitochondrial (Pgam5) (Mus musculus (Mouse)).